A 398-amino-acid polypeptide reads, in one-letter code: Chalcone synthase (398 aa).

C169 is a catalytic residue.

This sequence belongs to the thiolase-like superfamily. Chalcone/stilbene synthases family.

It catalyses the reaction (E)-4-coumaroyl-CoA + 3 malonyl-CoA + 3 H(+) = 2',4,4',6'-tetrahydroxychalcone + 3 CO2 + 4 CoA. Its pathway is secondary metabolite biosynthesis; flavonoid biosynthesis. Its function is as follows. The primary product of this enzyme is 4,2',4',6'-tetrahydroxychalcone (also termed naringenin-chalcone or chalcone) which can under specific conditions spontaneously isomerize into naringenin. This chain is Chalcone synthase (CHS), found in Petroselinum crispum (Parsley).